The chain runs to 267 residues: Phosphatidylglycerol--prolipoprotein diacylglyceryl transferase (267 aa).

The next 7 helical transmembrane spans lie at 17–37 (LNIR…WLLA), 56–76 (LVTY…TLFY), 91–111 (IWNG…AIWL), 120–140 (LFEV…AGRL), 173–193 (QLYE…LFSA), 199–219 (MAVS…VEFF), and 236–256 (MGQI…GFAM). An a 1,2-diacyl-sn-glycero-3-phospho-(1'-sn-glycerol)-binding site is contributed by R139.

Belongs to the Lgt family.

The protein resides in the cell inner membrane. It carries out the reaction L-cysteinyl-[prolipoprotein] + a 1,2-diacyl-sn-glycero-3-phospho-(1'-sn-glycerol) = an S-1,2-diacyl-sn-glyceryl-L-cysteinyl-[prolipoprotein] + sn-glycerol 1-phosphate + H(+). Its pathway is protein modification; lipoprotein biosynthesis (diacylglyceryl transfer). In terms of biological role, catalyzes the transfer of the diacylglyceryl group from phosphatidylglycerol to the sulfhydryl group of the N-terminal cysteine of a prolipoprotein, the first step in the formation of mature lipoproteins. This is Phosphatidylglycerol--prolipoprotein diacylglyceryl transferase from Oleidesulfovibrio alaskensis (strain ATCC BAA-1058 / DSM 17464 / G20) (Desulfovibrio alaskensis).